The following is a 431-amino-acid chain: Putative F-box/FBD/LRR-repeat protein At4g26350 (431 aa).

Residues 1–47 (MDIISQCPDHLLLRILSFIPTKDVIVTSLLSKRWGSLWRWVPKLEYD) enclose the F-box domain. LRR repeat units lie at residues 52-78 (NMRF…HLKN), 85-109 (CRTV…EISI), 132-159 (ILTI…HLRC), 160-185 (IGWA…RLAR), and 309-334 (CTQG…TLTN). The FBD domain occupies 348–398 (CWKRPSSVPACLLSSLQAFTWSGYKGRQGDKEVVKYVLRNATGLKKRIFIS).

The polypeptide is Putative F-box/FBD/LRR-repeat protein At4g26350 (Arabidopsis thaliana (Mouse-ear cress)).